Here is a 143-residue protein sequence, read N- to C-terminus: Transcriptional regulator MraZ (143 aa).

SpoVT-AbrB domains are found at residues 5–47 (EYLH…PLDE) and 76–119 (ATEC…SQAL).

This sequence belongs to the MraZ family. Forms oligomers.

The protein resides in the cytoplasm. Its subcellular location is the nucleoid. This chain is Transcriptional regulator MraZ, found in Desulfitobacterium hafniense (strain Y51).